The following is a 397-amino-acid chain: Phosphoglycerate kinase (397 aa).

Substrate-binding positions include 25–27 (DLN), Arg-41, 64–67 (HLGR), Arg-118, and Arg-151. Residues Lys-202, Glu-324, and 350–353 (GGDT) each bind ATP.

This sequence belongs to the phosphoglycerate kinase family. Monomer.

Its subcellular location is the cytoplasm. It carries out the reaction (2R)-3-phosphoglycerate + ATP = (2R)-3-phospho-glyceroyl phosphate + ADP. The protein operates within carbohydrate degradation; glycolysis; pyruvate from D-glyceraldehyde 3-phosphate: step 2/5. This is Phosphoglycerate kinase from Herminiimonas arsenicoxydans.